A 275-amino-acid polypeptide reads, in one-letter code: uncharacterized protein (275 aa).

Positions 171 to 268 (KMVCEFLEEH…GLTPKQYMKI (98 aa)) constitute an HTH araC/xylS-type domain. 2 DNA-binding regions (H-T-H motif) span residues 188 to 209 (NDLS…TKQK) and 235 to 258 (PIDA…KRQV).

This is an uncharacterized protein from Bacillus subtilis (strain 168).